Reading from the N-terminus, the 222-residue chain is MENSSKEDYKIQSFDLETQKLLKTALKDPGSVDLEKVSSVIVDQSLKDQVFSREAGRICYTIVQAEAKQTNGSVFRRNLLNRLQQEFKAREETRKRSTQEWVCLVSFICNIFDYLKVNNMPMVALVHPVYDCLFRLAQSDALKNEEEVDCLVLQLHRIGDQLEKMNVQLMDELFNLLRDGFLLQEDLSSMGRLLLLEILEFRAGGWKLSDTAQKYYYSEVTD.

One can recognise an MIF4G domain in the interval 3–205; that stretch reads NSSKEDYKIQ…LEILEFRAGG (203 aa).

Belongs to the MIF4GD family. In terms of assembly, interacts with eif4g1, eif4g2 and slbp; probably tethered by SLBP to the 3'-end of mRNAs ending with the histone stem-loop, it also interacts with eif4g1 which is bound to their 5'-end.

Its subcellular location is the cytoplasm. The protein resides in the nucleus. Functionally, functions in replication-dependent translation of histone mRNAs which differ from other eukaryotic mRNAs in that they do not end with a poly-A tail but a stem-loop. May participate in circularizing those mRNAs specifically enhancing their translation. The protein is MIF4G domain-containing protein B (mif4gdb) of Danio rerio (Zebrafish).